We begin with the raw amino-acid sequence, 412 residues long: MAAALLARASGPARRALCPRAWRQLHTIYQSVELPETHQMLLQTCRDFAEKELFPIAAQVDKEHLFPAAQVKKMGGLGLLAMDVPEELGGAGLDYLAYAIAMEEISRGCASTGVIMSVNNSLYLGPILKFGSKEQKQAWVTPFTSGDKIGCFALSEPGNGSDAGAASTTARAEGDSWVLNGTKAWITNAWEASAAVVFASTDRALQNKGISAFLVPMPTPGLTLGKKEDKLGIRGSSTANLIFEDCRIPKDSILGEPGMGFKIAMQTLDMGRIGIASQALGIAQTALDCAVNYAENRMAFGAPLTKLQVIQFKLADMALALESARLLTWRAAMLKDNKKPFIKEAAMAKLAASEAATAISHQAIQILGGMGYVTEMPAERHYRDARITEIYEGTSEIQRLVIAGHLLRSYRS.

The N-terminal 24 residues, 1 to 24, are a transit peptide targeting the mitochondrion; sequence MAAALLARASGPARRALCPRAWRQ. T27 carries the phosphothreonine modification. N6-acetyllysine; alternate is present on K51. K51 is modified (N6-succinyllysine; alternate). K72 carries the post-translational modification N6-acetyllysine. Residue K129 is modified to N6-acetyllysine; alternate. The residue at position 129 (K129) is an N6-succinyllysine; alternate. FAD-binding positions include 152 to 161 and 185 to 187; these read FALSEPGNGS and WIT. S161 contacts substrate. Residue K208 is modified to N6-acetyllysine. Residue K262 is modified to N6-acetyllysine; alternate. Residue K262 is modified to N6-succinyllysine; alternate. Residue 269-272 participates in substrate binding; that stretch reads DMGR. R297 is a binding site for FAD. K306 carries the N6-acetyllysine; alternate modification. K306 is modified (N6-succinyllysine; alternate). FAD-binding positions include Q308 and 365 to 369; that span reads QILGG. E392 (proton acceptor) is an active-site residue. G393 is a binding site for substrate. Residue 394–396 participates in FAD binding; that stretch reads TSE.

The protein belongs to the acyl-CoA dehydrogenase family. In terms of assembly, homotetramer. Requires FAD as cofactor.

The protein localises to the mitochondrion matrix. It carries out the reaction a short-chain 2,3-saturated fatty acyl-CoA + oxidized [electron-transfer flavoprotein] + H(+) = a short-chain (2E)-enoyl-CoA + reduced [electron-transfer flavoprotein]. The enzyme catalyses butanoyl-CoA + oxidized [electron-transfer flavoprotein] + H(+) = (2E)-butenoyl-CoA + reduced [electron-transfer flavoprotein]. The catalysed reaction is pentanoyl-CoA + oxidized [electron-transfer flavoprotein] + H(+) = (2E)-pentenoyl-CoA + reduced [electron-transfer flavoprotein]. It catalyses the reaction hexanoyl-CoA + oxidized [electron-transfer flavoprotein] + H(+) = (2E)-hexenoyl-CoA + reduced [electron-transfer flavoprotein]. The protein operates within lipid metabolism; mitochondrial fatty acid beta-oxidation. Short-chain specific acyl-CoA dehydrogenase is one of the acyl-CoA dehydrogenases that catalyze the first step of mitochondrial fatty acid beta-oxidation, an aerobic process breaking down fatty acids into acetyl-CoA and allowing the production of energy from fats. The first step of fatty acid beta-oxidation consists in the removal of one hydrogen from C-2 and C-3 of the straight-chain fatty acyl-CoA thioester, resulting in the formation of trans-2-enoyl-CoA. Among the different mitochondrial acyl-CoA dehydrogenases, short-chain specific acyl-CoA dehydrogenase acts specifically on acyl-CoAs with saturated 4 to 6 carbons long primary chains. This is Short-chain specific acyl-CoA dehydrogenase, mitochondrial (ACADS) from Homo sapiens (Human).